A 409-amino-acid polypeptide reads, in one-letter code: Arginine deiminase (409 aa).

The active-site Amidino-cysteine intermediate is Cys397.

This sequence belongs to the arginine deiminase family.

The protein localises to the cytoplasm. The enzyme catalyses L-arginine + H2O = L-citrulline + NH4(+). Its pathway is amino-acid degradation; L-arginine degradation via ADI pathway; carbamoyl phosphate from L-arginine: step 1/2. The protein is Arginine deiminase (arcA) of Metamycoplasma hominis (Mycoplasma hominis).